The primary structure comprises 267 residues: Outer membrane protein assembly factor BamD (267 aa).

Positions 1-16 are cleaved as a signal peptide; sequence MKKILLTVSLGLALSA. The N-palmitoyl cysteine moiety is linked to residue cysteine 17. Cysteine 17 is lipidated: S-diacylglycerol cysteine.

Belongs to the BamD family. Part of the Bam complex.

Its subcellular location is the cell outer membrane. Its function is as follows. Part of the outer membrane protein assembly complex, which is involved in assembly and insertion of beta-barrel proteins into the outer membrane. Required for efficient transformation of Neisseria meningitidis by species-related DNA. The sequence is that of Outer membrane protein assembly factor BamD from Neisseria meningitidis serogroup A / serotype 4A (strain DSM 15465 / Z2491).